The primary structure comprises 415 residues: Imidazolonepropionase (415 aa).

Fe(3+) is bound by residues His76 and His78. Residues His76 and His78 each contribute to the Zn(2+) site. Arg85, Tyr148, and His181 together coordinate 4-imidazolone-5-propanoate. An N-formimidoyl-L-glutamate-binding site is contributed by Tyr148. His246 is a binding site for Fe(3+). His246 contacts Zn(2+). Glu249 contacts 4-imidazolone-5-propanoate. Asp320 provides a ligand contact to Fe(3+). Position 320 (Asp320) interacts with Zn(2+). N-formimidoyl-L-glutamate-binding residues include Asn322 and Gly324. 4-imidazolone-5-propanoate is bound at residue Thr325.

The protein belongs to the metallo-dependent hydrolases superfamily. HutI family. The cofactor is Zn(2+). Fe(3+) is required as a cofactor.

The protein resides in the cytoplasm. It carries out the reaction 4-imidazolone-5-propanoate + H2O = N-formimidoyl-L-glutamate. Its pathway is amino-acid degradation; L-histidine degradation into L-glutamate; N-formimidoyl-L-glutamate from L-histidine: step 3/3. Catalyzes the hydrolytic cleavage of the carbon-nitrogen bond in imidazolone-5-propanoate to yield N-formimidoyl-L-glutamate. It is the third step in the universal histidine degradation pathway. This chain is Imidazolonepropionase, found in Caldanaerobacter subterraneus subsp. tengcongensis (strain DSM 15242 / JCM 11007 / NBRC 100824 / MB4) (Thermoanaerobacter tengcongensis).